Here is an 883-residue protein sequence, read N- to C-terminus: Putative pentatricopeptide repeat-containing protein At1g13800 (883 aa).

PPR repeat units lie at residues 145–180 (LIRVSTALVKAYANLDMFDEAIDIFFRAYYSLGRAP), 181–215 (DIKALNFLISRMIASGRSDMVVGFFWEIERLGLDA), 216–251 (DAHTYVLVVQALWRNDDKEELEKLLSRLLISETRNP), 253–285 (VFYLNFIEGLCLNQMTDIAYFLLQPLRDANILV), 290–324 (LGIAYRKVVRGLCYEMRIEDAESVVLDMEKHGIDP), 325–359 (DVYVYSAIIEGHRKNMNIPKAVDVFNKMLKKRKRI), 360–394 (NCVIVSSILQCYCQMGNFSEAYDLFKEFRETNISL), 395–429 (DRVCYNVAFDALGKLGKVEEAIELFREMTGKGIAP), 430–464 (DVINYTTLIGGCCLQGKCSDAFDLMIEMDGTGKTP), 465–499 (DIVIYNVLAGGLATNGLAQEAFETLKMMENRGVKP), 500–534 (TYVTHNMVIEGLIDAGELDKAEAFYESLEHKSREN), 537–561 (SMVKGFCAAGCLDHAFERFIRLEFP), 563–598 (PKSVYFTLFTSLCAEKDYISKAQDLLDRMWKLGVEP), 599–633 (EKSMYGKLIGAWCRVNNVRKAREFFEILVTKKIVP), 634–668 (DLFTYTIMINTYCRLNEPKQAYALFEDMKRRDVKP), 697–731 (DVVYYTIMINRYCHLNDLKKVYALFKDMKRREIVP), 760–794 (DVFYYTVLIDWQCKIGDLGEAKRIFDQMIESGVDP), 795–829 (DAAPYTALIACCCKMGYLKEAKMIFDRMIESGVKP), and 830–864 (DVVPYTALIAGCCRNGFVLKAVKLVKEMLEKGIKP).

The protein belongs to the PPR family. P subfamily.

This is Putative pentatricopeptide repeat-containing protein At1g13800 from Arabidopsis thaliana (Mouse-ear cress).